The following is a 277-amino-acid chain: R-spondin-3 (277 aa).

Positions 1–21 (MHLRLISCFFIILNFMEYIGS) are cleaved as a signal peptide. FU repeat units follow at residues 35–86 (PNVS…GYYG) and 92–135 (INKC…GLEA). Residue Asn-36 is glycosylated (N-linked (GlcNAc...) asparagine). Cystine bridges form between Cys-41–Cys-48, Cys-45–Cys-54, Cys-57–Cys-76, Cys-80–Cys-95, Cys-98–Cys-105, Cys-102–Cys-111, Cys-114–Cys-125, Cys-129–Cys-142, Cys-148–Cys-190, Cys-159–Cys-166, and Cys-199–Cys-206. Residues 147 to 207 (HCEASEWSPW…TCIVQRKKCS (61 aa)) form the TSP type-1 domain. Residues 210–277 (ERGKKGRERK…QKSVSVSTVH (68 aa)) form a disordered region. Residues 213 to 223 (KKGRERKRKKL) are compositionally biased toward basic residues. The span at 232 to 245 (SSSSDSKGLESSIE) shows a compositional bias: low complexity.

This sequence belongs to the R-spondin family. In terms of assembly, interacts with the extracellular domain of FZD8 and LRP6. It however does not form a ternary complex with FZD8 and LRP6. Interacts with WNT1. Binds heparin. Interacts with LGR4, LGR5 and LGR6. As to expression, highly expressed in endothelial cells.

It is found in the secreted. Functionally, activator of the canonical Wnt signaling pathway by acting as a ligand for LGR4-6 receptors, which acts as a key regulator of angiogenesis. Upon binding to LGR4-6 (LGR4, LGR5 or LGR6), LGR4-6 associate with phosphorylated LRP6 and frizzled receptors that are activated by extracellular Wnt receptors, triggering the canonical Wnt signaling pathway to increase expression of target genes. Also regulates the canonical Wnt/beta-catenin-dependent pathway and non-canonical Wnt signaling by acting as an inhibitor of ZNRF3, an important regulator of the Wnt signaling pathway. Acts as a ligand for frizzled FZD8 and LRP6. May negatively regulate the TGF-beta pathway. Acts as a key regulator of angiogenesis by controlling vascular stability and pruning: acts by activating the non-canonical Wnt signaling pathway in endothelial cells. Can also amplify Wnt signaling pathway independently of LGR4-6 receptors, possibly by acting as a direct antagonistic ligand to RNF43 and ZNRF3. The protein is R-spondin-3 (Rspo3) of Mus musculus (Mouse).